A 357-amino-acid polypeptide reads, in one-letter code: MSQNSNPAVVLEKVGDIAIEQRPIPTIKDPHYVKLAIKATGICGSDIHYYRSGGIGKYILKAPMVLGHESSGQVVEVGDAVTRVKVGDRVAIEPGVPSRYSDETKEGRYNLCPHMAFAATPPIDGTLVKYYLSPEDFLVKLPEGVSYEEGACVEPLSVGVHSNKLAGVRFGTKVVVFGAGPVGLLTGAVARAFGATDVIFVDVFDNKLQRAKDFGATNTFNSSQFSTDKAQDLADGVQKLLGGNHADVVFECSGADVCIDAAVKTTKVGGTMVQVGMGKNYTNFPIAEVSGKEMKLIGCFRYSFGDYRDAVNLVATGKVNVKPLITHKFKFEDAAKAYDYNIAHGGEVVKTIIFGPE.

Cysteine 43 serves as a coordination point for Zn(2+). A substrate-binding site is contributed by tyrosine 49. Histidine 68 and glutamate 69 together coordinate Zn(2+). Glutamate 154 contacts substrate. Residues aspartate 202, lysine 207, 275 to 277 (VGM), and 299 to 301 (CFR) contribute to the NAD(+) site. Positions 301 and 302 each coordinate substrate.

Belongs to the zinc-containing alcohol dehydrogenase family. Homotetramer. Zn(2+) serves as cofactor.

The catalysed reaction is keto-D-fructose + NADH + H(+) = D-sorbitol + NAD(+). It carries out the reaction xylitol + NAD(+) = D-xylulose + NADH + H(+). Polyol dehydrogenase that catalyzes the reversible NAD(+)-dependent oxidation of various sugar alcohols. Is active with D-sorbitol (D-glucitol) and xylitol as substrates, leading to the C2-oxidized product D-fructose and D-xylulose, respectively. Is likely involved in the utilization of D-sorbitol as a sole carbon source for growth. Has no activity on mannitol and primary alcohols such as ethanol. This is Sorbitol dehydrogenase 1 (SOR1) from Saccharomyces cerevisiae (strain ATCC 204508 / S288c) (Baker's yeast).